A 250-amino-acid polypeptide reads, in one-letter code: Cell division protein ZapD (250 aa).

Belongs to the ZapD family. Interacts with FtsZ.

Its subcellular location is the cytoplasm. Functionally, cell division factor that enhances FtsZ-ring assembly. Directly interacts with FtsZ and promotes bundling of FtsZ protofilaments, with a reduction in FtsZ GTPase activity. The chain is Cell division protein ZapD from Serratia proteamaculans (strain 568).